Here is a 122-residue protein sequence, read N- to C-terminus: Large ribosomal subunit protein bL12 (122 aa).

This sequence belongs to the bacterial ribosomal protein bL12 family. As to quaternary structure, homodimer. Part of the ribosomal stalk of the 50S ribosomal subunit. Forms a multimeric L10(L12)X complex, where L10 forms an elongated spine to which 2 to 4 L12 dimers bind in a sequential fashion. Binds GTP-bound translation factors.

Its function is as follows. Forms part of the ribosomal stalk which helps the ribosome interact with GTP-bound translation factors. Is thus essential for accurate translation. The chain is Large ribosomal subunit protein bL12 from Flavobacterium psychrophilum (strain ATCC 49511 / DSM 21280 / CIP 103535 / JIP02/86).